Here is a 245-residue protein sequence, read N- to C-terminus: uncharacterized protein (245 aa).

This sequence to M.tuberculosis Rv2927c.

This is an uncharacterized protein from Mycobacterium leprae (strain TN).